Reading from the N-terminus, the 494-residue chain is Cytochrome P450 2A13 (494 aa).

Residue Asn297 participates in substrate binding. Cys439 is a binding site for heme.

This sequence belongs to the cytochrome P450 family. Heme is required as a cofactor. In terms of tissue distribution, expressed in liver and a number of extrahepatic tissues, including nasal mucosa, lung, trachea, brain, mammary gland, prostate, testis, and uterus, but not in heart, kidney, bone marrow, colon, small intestine, spleen, stomach, thymus, or skeletal muscle.

Its subcellular location is the endoplasmic reticulum membrane. It is found in the microsome membrane. It carries out the reaction an organic molecule + reduced [NADPH--hemoprotein reductase] + O2 = an alcohol + oxidized [NADPH--hemoprotein reductase] + H2O + H(+). Exhibits a coumarin 7-hydroxylase activity. Active in the metabolic activation of hexamethylphosphoramide, N,N-dimethylaniline, 2'-methoxyacetophenone, N-nitrosomethylphenylamine, and the tobacco-specific carcinogen, 4-(methylnitrosamino)-1-(3-pyridyl)-1-butanone. Possesses phenacetin O-deethylation activity. The chain is Cytochrome P450 2A13 (CYP2A13) from Homo sapiens (Human).